A 342-amino-acid polypeptide reads, in one-letter code: Ribosomal RNA small subunit methyltransferase C (342 aa).

It belongs to the methyltransferase superfamily. RsmC family. Monomer.

The protein localises to the cytoplasm. It catalyses the reaction guanosine(1207) in 16S rRNA + S-adenosyl-L-methionine = N(2)-methylguanosine(1207) in 16S rRNA + S-adenosyl-L-homocysteine + H(+). In terms of biological role, specifically methylates the guanine in position 1207 of 16S rRNA in the 30S particle. In Cronobacter sakazakii (strain ATCC BAA-894) (Enterobacter sakazakii), this protein is Ribosomal RNA small subunit methyltransferase C.